Consider the following 256-residue polypeptide: Glutamate racemase (256 aa).

Substrate is bound by residues 11–12 and 43–44; these read DS and YG. C74 acts as the Proton donor/acceptor in catalysis. 75-76 provides a ligand contact to substrate; sequence NT. C182 acts as the Proton donor/acceptor in catalysis. 183–184 serves as a coordination point for substrate; the sequence is TH.

This sequence belongs to the aspartate/glutamate racemases family.

It catalyses the reaction L-glutamate = D-glutamate. It participates in cell wall biogenesis; peptidoglycan biosynthesis. Provides the (R)-glutamate required for cell wall biosynthesis. In Leptospira interrogans serogroup Icterohaemorrhagiae serovar copenhageni (strain Fiocruz L1-130), this protein is Glutamate racemase.